A 123-amino-acid polypeptide reads, in one-letter code: MDVFKKGFSIAKEGVVGAVEKTKQGVTEAAEKTKEGVMYVGTKTKENVVQSVTSVAEKTKEQANAVSEAVVSSVNTVANKTVEEAENIVVTTGVVRKEDLEPPAQDQEAKEQEENEEAKSGED.

2 repeat units span residues 20 to 30 (EKTKQGVTEAA) and 31 to 41 (EKTKEGVMYVG). The interval 20–67 (EKTKQGVTEAAEKTKEGVMYVGTKTKENVVQSVTSVAEKTKEQANAVS) is 4 X 11 AA tandem repeats of [EGSA]-K-T-K-[EQ]-[GQ]-V-X(4). The 3; approximate repeat unit spans residues 42–56 (TKTKENVVQSVTSVA). Residues 57–67 (EKTKEQANAVS) form repeat 4. Residues S67 and S72 each carry the phosphoserine modification. The interval 91–123 (TTGVVRKEDLEPPAQDQEAKEQEENEEAKSGED) is disordered. A compositionally biased stretch (basic and acidic residues) spans 107 to 123 (QEAKEQEENEEAKSGED). Residue S120 is modified to Phosphoserine; by BARK1, CaMK2 and CK2.

The protein belongs to the synuclein family. As to quaternary structure, may be a centrosome-associated protein. Interacts with MYOC; affects its secretion and its aggregation. Phosphorylated. Phosphorylation by GRK5 appears to occur on residues distinct from the residue phosphorylated by other kinases. As to expression, highly expressed in brain, particularly in the substantia nigra. Also expressed in the corpus callosum, heart, skeletal muscle, ovary, testis, colon and spleen. Weak expression in pancreas, kidney and lung. Expressed predominantly in the cell bodies and axons of primary sensory neurons, sympathetic neurons and motoneurons.

It is found in the cytoplasm. The protein localises to the perinuclear region. Its subcellular location is the cytoskeleton. It localises to the microtubule organizing center. The protein resides in the centrosome. It is found in the spindle. In terms of biological role, plays a role in neurofilament network integrity. May be involved in modulating axonal architecture during development and in the adult. In vitro, increases the susceptibility of neurofilament-H to calcium-dependent proteases. May also function in modulating the keratin network in skin. Activates the MAPK and Elk-1 signal transduction pathway. This is Gamma-synuclein (Sncg) from Mus musculus (Mouse).